Here is a 567-residue protein sequence, read N- to C-terminus: uncharacterized protein (567 aa).

The interval 1 to 26 is disordered; the sequence is MPSEKATTRHLPGAVETLSPRTGRRP. The next 6 membrane-spanning stretches (helical) occupy residues 57-77, 90-110, 142-162, 173-193, 221-241, and 257-277; these read AILVTNVIGLIVGAMLLTVAF, VSFGIVPGYCVLAFILGTYWL, VALAVLFLWGAAAALWTIIYG, LFSMGVIGVVAATSCYLLTEF, MLVWLLCSGVPNVGVALTAIF, and VLILWAPLLIFGFILMWILAW. The 52-residue stretch at 278 to 329 folds into the HAMP domain; sequence LTATPVRVVREALNRVEQGDLSGDLVVFDGTELGELQRGFNRMVEGLRERER. A Guanylate cyclase domain is found at 361–485; that stretch reads AVVFVDIVGS…EPVNEAARLC (125 aa).

Belongs to the adenylyl cyclase class-3 family.

Its subcellular location is the cell membrane. This is an uncharacterized protein from Mycobacterium tuberculosis (strain ATCC 25618 / H37Rv).